A 315-amino-acid polypeptide reads, in one-letter code: Ribosome biogenesis protein BRX1 homolog 1 (315 aa).

The tract at residues 1–35 (MGRKRKHSETVTAAPVKDSAPERPQRTLLGWKDKK) is disordered. A compositionally biased stretch (basic and acidic residues) spans 19–35 (SAPERPQRTLLGWKDKK). The region spanning 53-256 (EKVLVTCSRR…PIKIFGGSFG (204 aa)) is the Brix domain.

The protein belongs to the BRX1 family. In terms of tissue distribution, expressed in roots, rosette leaves, stems, flowers, siliques and seeds.

The protein localises to the nucleus. It is found in the nucleolus. Involved in pre-rRNA processing and required for biogenesis of the large (60S) ribosomal subunit. Required for proper development. The protein is Ribosome biogenesis protein BRX1 homolog 1 of Arabidopsis thaliana (Mouse-ear cress).